We begin with the raw amino-acid sequence, 196 residues long: Chromophore lyase CpcT/CpeT (196 aa).

It belongs to the CpcT/CpeT biliprotein lyase family.

Its function is as follows. Covalently attaches a chromophore to Cys residue(s) of phycobiliproteins. The protein is Chromophore lyase CpcT/CpeT of Synechococcus sp. (strain WH8020).